Here is a 323-residue protein sequence, read N- to C-terminus: Thioredoxin reductase (323 aa).

42–49 (YRAEADGA) serves as a coordination point for FAD. Cysteine 143 and cysteine 146 are disulfide-bonded. 286-295 (DVLCNEVKQA) is a binding site for FAD.

Belongs to the class-II pyridine nucleotide-disulfide oxidoreductase family. As to quaternary structure, homodimer. It depends on FAD as a cofactor.

It is found in the cytoplasm. It carries out the reaction [thioredoxin]-dithiol + NADP(+) = [thioredoxin]-disulfide + NADPH + H(+). The chain is Thioredoxin reductase (trxB) from Aquifex aeolicus (strain VF5).